The primary structure comprises 752 residues: Catalase-peroxidase (752 aa).

The interval M1–D21 is disordered. A cross-link (tryptophyl-tyrosyl-methioninium (Trp-Tyr) (with M-271)) is located at residues W91–Y245. The Proton acceptor role is filled by H92. The disordered stretch occupies residues Q204 to A228. Residues P215–A228 are compositionally biased toward basic and acidic residues. The segment at residues Y245–M271 is a cross-link (tryptophyl-tyrosyl-methioninium (Tyr-Met) (with W-91)). Residue H286 participates in heme binding. A disordered region spans residues A366–A391.

The protein belongs to the peroxidase family. Peroxidase/catalase subfamily. As to quaternary structure, homodimer or homotetramer. The cofactor is heme b. In terms of processing, formation of the three residue Trp-Tyr-Met cross-link is important for the catalase, but not the peroxidase activity of the enzyme.

It carries out the reaction H2O2 + AH2 = A + 2 H2O. The enzyme catalyses 2 H2O2 = O2 + 2 H2O. Functionally, bifunctional enzyme with both catalase and broad-spectrum peroxidase activity. This is Catalase-peroxidase from Pseudomonas putida (strain W619).